Here is a 494-residue protein sequence, read N- to C-terminus: Cysteine--tRNA ligase (494 aa).

Cys-29 contacts Zn(2+). The 'HIGH' region motif lies at 31–41; the sequence is LTVSDDAHLGH. The interval 187-220 is disordered; sequence KAGGVSPDDANTHRDDELPPLDGERGQTWASPWG. Residues 196-211 show a composition bias toward basic and acidic residues; it reads ANTHRDDELPPLDGER. Positions 230, 255, and 259 each coordinate Zn(2+). The 'KMSKS' region motif lies at 287–291; it reads KMSSS.

Belongs to the class-I aminoacyl-tRNA synthetase family. It depends on Zn(2+) as a cofactor.

Its subcellular location is the cytoplasm. The catalysed reaction is tRNA(Cys) + L-cysteine + ATP = L-cysteinyl-tRNA(Cys) + AMP + diphosphate. The sequence is that of Cysteine--tRNA ligase from Halobacterium salinarum (strain ATCC 700922 / JCM 11081 / NRC-1) (Halobacterium halobium).